A 463-amino-acid polypeptide reads, in one-letter code: Exodeoxyribonuclease 7 large subunit (463 aa).

Belongs to the XseA family. In terms of assembly, heterooligomer composed of large and small subunits.

The protein resides in the cytoplasm. The catalysed reaction is Exonucleolytic cleavage in either 5'- to 3'- or 3'- to 5'-direction to yield nucleoside 5'-phosphates.. Bidirectionally degrades single-stranded DNA into large acid-insoluble oligonucleotides, which are then degraded further into small acid-soluble oligonucleotides. The polypeptide is Exodeoxyribonuclease 7 large subunit (Bordetella pertussis (strain Tohama I / ATCC BAA-589 / NCTC 13251)).